Here is a 500-residue protein sequence, read N- to C-terminus: Protein FAM114A2 (500 aa).

A disordered region spans residues 1 to 82; sequence MSNKDDLETA…AAGKETVSKD (82 aa). 3 positions are modified to phosphoserine: Ser93, Ser152, and Ser215.

Belongs to the FAM114 family.

The sequence is that of Protein FAM114A2 (FAM114A1) from Bos taurus (Bovine).